The chain runs to 147 residues: Cyanate hydratase (147 aa).

Residues arginine 88, glutamate 91, and serine 114 contribute to the active site.

Belongs to the cyanase family.

The catalysed reaction is cyanate + hydrogencarbonate + 3 H(+) = NH4(+) + 2 CO2. Functionally, catalyzes the reaction of cyanate with bicarbonate to produce ammonia and carbon dioxide. The protein is Cyanate hydratase of Variovorax paradoxus (strain S110).